We begin with the raw amino-acid sequence, 192 residues long: Orotate phosphoribosyltransferase (192 aa).

116 to 124 provides a ligand contact to 5-phospho-alpha-D-ribose 1-diphosphate; the sequence is EDIVTTGLS. Orotate contacts are provided by T120 and R148.

The protein belongs to the purine/pyrimidine phosphoribosyltransferase family. PyrE subfamily. In terms of assembly, homodimer. The cofactor is Mg(2+).

The enzyme catalyses orotidine 5'-phosphate + diphosphate = orotate + 5-phospho-alpha-D-ribose 1-diphosphate. It functions in the pathway pyrimidine metabolism; UMP biosynthesis via de novo pathway; UMP from orotate: step 1/2. Functionally, catalyzes the transfer of a ribosyl phosphate group from 5-phosphoribose 1-diphosphate to orotate, leading to the formation of orotidine monophosphate (OMP). This is Orotate phosphoribosyltransferase from Brucella anthropi (strain ATCC 49188 / DSM 6882 / CCUG 24695 / JCM 21032 / LMG 3331 / NBRC 15819 / NCTC 12168 / Alc 37) (Ochrobactrum anthropi).